The primary structure comprises 421 residues: Core-capsid bridging protein (421 aa).

The protein belongs to the adenoviridae core-capsid bridging protein family. As to quaternary structure, monomer. Homodimer. Exists in equilibrium between monomers and dimers in solution. Interacts with the histone-like nucleoprotein; this interactions bridge the virus core to the capsid. Interacts with core protein X; this interactions bridge the virus core to the capsid. Interacts with the endosome lysis protein VI; this interactions bridge the virus core to the capsid. Interacts with the peripentonal hexons. Interacts with host NPM1; this interaction might play a role in virus assembly.

It localises to the virion. The protein localises to the host nucleus. The protein resides in the host nucleolus. Its function is as follows. Associates loosely with the viral DNA to form an outer shell around the nucleoprotein-DNA complex and links it with the capsid by binding the endosome lysis protein. Dissociates from the viral genome during entry. Might be involved in nuclear capsid assembly of the viral particles through its association with NPM1/nucleophosmin. The protein is Core-capsid bridging protein of Canine adenovirus serotype 1 (strain RI261) (CAdV-1).